Reading from the N-terminus, the 51-residue chain is Sperm protamine P1 (51 aa).

The protein belongs to the protamine P1 family. As to expression, testis.

The protein resides in the nucleus. Its subcellular location is the chromosome. Functionally, protamines substitute for histones in the chromatin of sperm during the haploid phase of spermatogenesis. They compact sperm DNA into a highly condensed, stable and inactive complex. The protein is Sperm protamine P1 (PRM1) of Colobus guereza (Mantled guereza).